The chain runs to 185 residues: Ribosome-recycling factor (185 aa).

This sequence belongs to the RRF family.

It is found in the cytoplasm. In terms of biological role, responsible for the release of ribosomes from messenger RNA at the termination of protein biosynthesis. May increase the efficiency of translation by recycling ribosomes from one round of translation to another. In Rhodospirillum centenum (strain ATCC 51521 / SW), this protein is Ribosome-recycling factor.